Reading from the N-terminus, the 56-residue chain is Large ribosomal subunit protein eL37 (56 aa).

Zn(2+) contacts are provided by C19, C22, C34, and C37. The C4-type zinc-finger motif lies at C19–C37.

Belongs to the eukaryotic ribosomal protein eL37 family. Requires Zn(2+) as cofactor.

Binds to the 23S rRNA. The polypeptide is Large ribosomal subunit protein eL37 (Methanothrix thermoacetophila (strain DSM 6194 / JCM 14653 / NBRC 101360 / PT) (Methanosaeta thermophila)).